The primary structure comprises 388 residues: Succinate--CoA ligase [ADP-forming] subunit beta (388 aa).

Residues 9–244 form the ATP-grasp domain; the sequence is KEILRKFGVA…PDEEDPKETQ (236 aa). Residues Lys-46, 53 to 55, Glu-99, Cys-102, and Glu-107 each bind ATP; that span reads GRG. Mg(2+) is bound by residues Asn-199 and Asp-213. Substrate contacts are provided by residues Asn-264 and 321–323; that span reads GIM.

It belongs to the succinate/malate CoA ligase beta subunit family. In terms of assembly, heterotetramer of two alpha and two beta subunits. It depends on Mg(2+) as a cofactor.

The enzyme catalyses succinate + ATP + CoA = succinyl-CoA + ADP + phosphate. It catalyses the reaction GTP + succinate + CoA = succinyl-CoA + GDP + phosphate. The protein operates within carbohydrate metabolism; tricarboxylic acid cycle; succinate from succinyl-CoA (ligase route): step 1/1. In terms of biological role, succinyl-CoA synthetase functions in the citric acid cycle (TCA), coupling the hydrolysis of succinyl-CoA to the synthesis of either ATP or GTP and thus represents the only step of substrate-level phosphorylation in the TCA. The beta subunit provides nucleotide specificity of the enzyme and binds the substrate succinate, while the binding sites for coenzyme A and phosphate are found in the alpha subunit. This is Succinate--CoA ligase [ADP-forming] subunit beta from Anaeromyxobacter dehalogenans (strain 2CP-1 / ATCC BAA-258).